The following is a 184-amino-acid chain: uncharacterized protein (184 aa).

Residues 1–24 are disordered; it reads MGISDQINSNLSSQSPFTVSTNPS.

This is an uncharacterized protein from Dictyostelium discoideum (Social amoeba).